A 274-amino-acid polypeptide reads, in one-letter code: Penicillin-insensitive murein endopeptidase (274 aa).

A signal peptide spans 1–19 (MNKTAIALLALLASSASLA). 3 cysteine pairs are disulfide-bonded: Cys44/Cys265, Cys187/Cys235, and Cys216/Cys223. The Zn(2+) site is built by His110, His113, Asp120, Asp147, His150, and His211.

Belongs to the peptidase M74 family. As to quaternary structure, dimer. Zn(2+) is required as a cofactor.

The protein resides in the periplasm. Its function is as follows. Murein endopeptidase that cleaves the D-alanyl-meso-2,6-diamino-pimelyl amide bond that connects peptidoglycan strands. Likely plays a role in the removal of murein from the sacculus. This Shigella sonnei (strain Ss046) protein is Penicillin-insensitive murein endopeptidase.